The following is a 156-amino-acid chain: Transcriptional repressor NrdR (156 aa).

The segment at 3 to 34 (CPSCQFNGTRVVDSRPVDDNKEIRRRRECESC) is a zinc-finger region. The ATP-cone domain maps to 49-139 (LVVVKKEGSR…VYRQFKDINV (91 aa)).

This sequence belongs to the NrdR family. It depends on Zn(2+) as a cofactor.

Its function is as follows. Negatively regulates transcription of bacterial ribonucleotide reductase nrd genes and operons by binding to NrdR-boxes. The chain is Transcriptional repressor NrdR from Lysinibacillus sphaericus (strain C3-41).